A 690-amino-acid chain; its full sequence is Glycine--tRNA ligase beta subunit (690 aa).

This sequence belongs to the class-II aminoacyl-tRNA synthetase family. As to quaternary structure, tetramer of two alpha and two beta subunits.

It is found in the cytoplasm. It catalyses the reaction tRNA(Gly) + glycine + ATP = glycyl-tRNA(Gly) + AMP + diphosphate. This Tolumonas auensis (strain DSM 9187 / NBRC 110442 / TA 4) protein is Glycine--tRNA ligase beta subunit.